The primary structure comprises 660 residues: MSSPSKAIELQLQMKQNAEDLQDFMREMESWEKDIKQKDAKLRNQTGVENQILPPIRNKDFKKKKKNKPKPPLEKSQEDCLNPKKKLLDYEYWDKLDVDKALEDIDKDNSNETSSDSECGDEDAITVDTEKALSEKEKGNNYFKSGKYDEAIECYTRGMDADPYNAILPTNRASAFFRLKKFAVAESDCNLAIALNRDYAKAYARRGAARLALKNLQGAKEDYEKVLELDANNFEAKNELRKINQELYSSASDVQENMATEAKITVENEEEKKQIEIQQRKQQAIMQKDLGNAYFKEGKYEIAIECYSQGMEADNTNALLPANRAMAYLKIQKYKEAEADCTLAISLDASYCKAFARRGTASIMLGKQKEAKEDFEMVLKLDPGNKQAVLELAKISQELRSIEKDRNGNKDSNQRKLINTVEKLPHLRSTKPLRRMVIEEVGGPAEIFNTSLKETNHRKADSVDLTAETNTQDLNQEQNICNSPDVPSPKIPKIEEISDTPGSCEPTTGEDYLTSRPSPPKIEKVVSTFSESLNIGIPAVPTNSFQLESDFRRLKGNPDLLYVYLKQIEPTLYGKLFKKALDPDLFSDILTILREQFINKDSPDLIFEILQRLSELKRFDMAVMFLSESDKNNAHILFSHLEQSMNANVSFNALKKKYGL.

A TPR 1 repeat occupies 8–41; it reads IELQLQMKQNAEDLQDFMREMESWEKDIKQKDAK. Disordered stretches follow at residues 35 to 80 and 106 to 125; these read IKQK…QEDC and DKDN…EDAI. Positions 60 to 69 are enriched in basic residues; the sequence is DFKKKKKNKP. The span at 71–80 shows a compositional bias: basic and acidic residues; that stretch reads PPLEKSQEDC. TPR repeat units lie at residues 132–165, 167–199, 200–233, 284–317, 319–351, 352–385, and 502–539; these read ALSE…DPYN, ILPT…NRDY, AKAY…DANN, AIMQ…DNTN, LLPA…DASY, CKAF…DPGN, and GSCE…GIPA. A disordered region spans residues 496–517; the sequence is EISDTPGSCEPTTGEDYLTSRP.

The protein belongs to the RPAP3 family.

Functionally, may for an interface between the RNA polymerase II enzyme and chaperone/scaffolding protein. The chain is RNA polymerase II-associated protein 3 (rpap3) from Xenopus laevis (African clawed frog).